A 342-amino-acid chain; its full sequence is Flagellar P-ring protein (342 aa).

The signal sequence occupies residues 1–19 (MKRVFLWLIFVLAFHKLLA).

It belongs to the FlgI family. The basal body constitutes a major portion of the flagellar organelle and consists of four rings (L,P,S, and M) mounted on a central rod.

The protein resides in the periplasm. It localises to the bacterial flagellum basal body. In terms of biological role, assembles around the rod to form the L-ring and probably protects the motor/basal body from shearing forces during rotation. This chain is Flagellar P-ring protein, found in Helicobacter pylori (strain P12).